A 178-amino-acid polypeptide reads, in one-letter code: Cell wall-binding protein YwsB (178 aa).

Residues 1 to 30 form the signal peptide; sequence MNKPTKLFSTLALAAGMTAAAAGGAGTIHA. 2 SH3b domains span residues 47-111 and 116-178; these read IDSY…VKAA and TKTK…HMTK.

The protein localises to the secreted. It localises to the cell wall. With respect to regulation, increases in stationary phase in a strain lacking the WprA protease. In Bacillus subtilis (strain 168), this protein is Cell wall-binding protein YwsB (ywsB).